The chain runs to 610 residues: DNA replication regulator sld2 (610 aa).

Residues 28-42 are compositionally biased toward basic and acidic residues; that stretch reads WAQKNDGKKPSREAI. 3 disordered regions span residues 28–115, 127–261, and 338–610; these read WAQK…AVHE, SPAV…ERSV, and EQGG…RRRR. Composition is skewed to polar residues over residues 86-110 and 232-261; these read ETSLPSASTPSKRNRSAATPKSQHY and TKTSTPLNKNTGNSPSKNNLTKTPSGERSV. Composition is skewed to acidic residues over residues 373-386 and 414-428; these read VPEEENSFEEDEAA and FDDENFYDSQDEEDL. Basic residues predominate over residues 442–464; the sequence is VFKKKGQKRTTRKVNMRPTRTKR. Positions 470-480 are enriched in acidic residues; the sequence is AEEEDDGEEEH. Over residues 493–503 the composition is skewed to basic and acidic residues; the sequence is KNLDGDDHHTL. The span at 514–527 shows a compositional bias: acidic residues; that stretch reads EFDDGSEGEDEEAE. Basic and acidic residues predominate over residues 544–573; that stretch reads SAKEKTKKDATTETKKKKGTKEGGDEEPAK.

It belongs to the SLD2 family.

It is found in the cytoplasm. Its subcellular location is the nucleus. Has a role in the initiation of DNA replication. Required at S-phase checkpoint. This Neurospora crassa (strain ATCC 24698 / 74-OR23-1A / CBS 708.71 / DSM 1257 / FGSC 987) protein is DNA replication regulator sld2 (drc-4).